A 385-amino-acid chain; its full sequence is O-phospho-L-seryl-tRNA:Cys-tRNA synthase (385 aa).

Pyridoxal 5'-phosphate is bound by residues 89–90 (AR), Asn195, and 218–220 (SGH). Position 221 is an N6-(pyridoxal phosphate)lysine (Lys221).

This sequence belongs to the SepCysS family. As to quaternary structure, homodimer. Interacts with SepRS. Requires pyridoxal 5'-phosphate as cofactor.

The enzyme catalyses O-phospho-L-seryl-tRNA(Cys) + hydrogen sulfide + H(+) = L-cysteinyl-tRNA(Cys) + phosphate. In terms of biological role, converts O-phospho-L-seryl-tRNA(Cys) (Sep-tRNA(Cys)) to L-cysteinyl-tRNA(Cys) (Cys-tRNA(Cys)). The protein is O-phospho-L-seryl-tRNA:Cys-tRNA synthase of Methanococcus aeolicus (strain ATCC BAA-1280 / DSM 17508 / OCM 812 / Nankai-3).